Reading from the N-terminus, the 153-residue chain is Ergochrome gene cluster protein CPUR_05425 (153 aa).

It participates in pigment biosynthesis. Its function is as follows. Part of the ergochrome gene cluster responsible for the typical purple-black color of the ergot sclerotia. The ergochrome gene cluster produces several ergot pigments including the yellow ergochrome secalonic acid and its derivatives, as well as the red anthraquinones endocrocin and clavorubin. The pathway begins with the synthesis of atrochrysone thioester by the polyketide synthase (PKS) CPUR_05437. The atrochrysone carboxyl ACP thioesterase CPUR_05436 then breaks the thioester bond and releases the atrochrysone carboxylic acid from CPUR_05437. The atrochrysone carboxylic acid is then converted to atrochrysone which is further transformed into emodin anthrone. The next step is performed by the anthrone oxygenase CPUR_05434 that catalyzes the oxidation of emodinanthrone to emodin. Emodin is further modified to yield monodictyphenone via several steps involving CPUR_05427, CPUR_05428, CPUR_05429 and CPUR_05430. The short chain dehydrogenase/reductase CPUR_05418 then catalyzes the C-5 ketoreduction to give the xanthone skeleton of the monomeric units. Ergochromes formation requires further dimerization steps of different xanthone units, probably catalyzed by the cytochrome P450 monooxygenase CPUR_05419. CPUR_05425, CPUR_05426 and CPUR_05431 are unique to Claviceps, thus it is likely that they are involved in further modification of xanthone units or in their dimerization. The yellow ergochromes and the red anthraquinone pigments endocrocin and clavorubin are products from the same PKS derived precursors and the latter are likely shunt products in the pathway of xanthone biosynthesis. It is proposed that atrochrysone carboxylic acid released from the PKS CPUR_05437 can also be converted to endocrocin anthrone which is further oxidized into endocrocin by CPUR_05435. Endocrocin could be then modified to clavorubin, possibly by CPUR_05423 and CPUR_05431. Clavorubin is the principal anthraquinone metabolite produced by the cluster with a much higher yield compared to endocrocin. This Claviceps purpurea (strain 20.1) (Ergot fungus) protein is Ergochrome gene cluster protein CPUR_05425.